Here is a 586-residue protein sequence, read N- to C-terminus: RNA-directed RNA polymerase subunit beta (586 aa).

The RdRp catalytic domain maps to V259 to G391. Residues D274, D359, and D360 each coordinate Mg(2+).

Homodimer; the replicase complex can dimerize. Part of the viral RNA-dependent RNA polymerase complex, the other subunits are the host ribosomal protein S1, EF-Tu and EF-Ts. S1 is needed for the initiation of genomic RNA (+)-strand replication. The cofactor is Mg(2+).

The enzyme catalyses RNA(n) + a ribonucleoside 5'-triphosphate = RNA(n+1) + diphosphate. Functionally, this is the catalytic subunit of the viral RNA-dependent RNA polymerase complex. This complex is involved in viral RNA replication that produces (+)-stranded genomes via a complementary, (-)-stranded intermediate. Binds RNA cooperatively with the host ribosomal protein S1. In Escherichia coli, this protein is RNA-directed RNA polymerase subunit beta.